A 376-amino-acid polypeptide reads, in one-letter code: Putative F-box protein At1g30930 (376 aa).

The F-box domain occupies 1–44; sequence MKNSIPIDLIIEIVSRSTAKSVARCHCVSKQWRAIFRRKYFIEL.

In Arabidopsis thaliana (Mouse-ear cress), this protein is Putative F-box protein At1g30930.